The primary structure comprises 93 residues: Large ribosomal subunit protein bL27 (93 aa).

Residues 1 to 10 constitute a propeptide that is removed on maturation; it reads MLLKLQIQLF.

It belongs to the bacterial ribosomal protein bL27 family. Post-translationally, the N-terminus is cleaved by ribosomal processing cysteine protease Prp.

The protein is Large ribosomal subunit protein bL27 of Phytoplasma australiense.